The sequence spans 358 residues: Protein-glutamate methylesterase/protein-glutamine glutaminase 3 (358 aa).

The Response regulatory domain occupies 2-118; the sequence is KILVVDDSAL…CGRLQEVAPL (117 aa). 4-aspartylphosphate is present on D52. The CheB-type methylesterase domain maps to 155-325; it reads NNEDHQLAIM…VPSMPEALLK (171 aa). Residues S167, H194, and D291 contribute to the active site.

Belongs to the CheB family. Phosphorylated by CheA. Phosphorylation of the N-terminal regulatory domain activates the methylesterase activity.

The protein localises to the cytoplasm. The enzyme catalyses [protein]-L-glutamate 5-O-methyl ester + H2O = L-glutamyl-[protein] + methanol + H(+). The catalysed reaction is L-glutaminyl-[protein] + H2O = L-glutamyl-[protein] + NH4(+). Its function is as follows. Involved in chemotaxis. Part of a chemotaxis signal transduction system that modulates chemotaxis in response to various stimuli. Catalyzes the demethylation of specific methylglutamate residues introduced into the chemoreceptors (methyl-accepting chemotaxis proteins or MCP) by CheR. Also mediates the irreversible deamidation of specific glutamine residues to glutamic acid. The sequence is that of Protein-glutamate methylesterase/protein-glutamine glutaminase 3 from Vibrio cholerae serotype O1 (strain ATCC 39315 / El Tor Inaba N16961).